The following is a 165-amino-acid chain: NADPH-dependent 7-cyano-7-deazaguanine reductase (165 aa).

Cys-56 functions as the Thioimide intermediate in the catalytic mechanism. Catalysis depends on Asp-63, which acts as the Proton donor. Substrate is bound by residues 78–80 and 97–98; these read VES and HE.

Belongs to the GTP cyclohydrolase I family. QueF type 1 subfamily.

The protein localises to the cytoplasm. The enzyme catalyses 7-aminomethyl-7-carbaguanine + 2 NADP(+) = 7-cyano-7-deazaguanine + 2 NADPH + 3 H(+). It functions in the pathway tRNA modification; tRNA-queuosine biosynthesis. Catalyzes the NADPH-dependent reduction of 7-cyano-7-deazaguanine (preQ0) to 7-aminomethyl-7-deazaguanine (preQ1). The chain is NADPH-dependent 7-cyano-7-deazaguanine reductase from Bacillus pumilus (strain SAFR-032).